A 719-amino-acid chain; its full sequence is Pesticidal crystal protein Cry1Ic (719 aa).

This sequence belongs to the delta endotoxin family.

Promotes colloidosmotic lysis by binding to the midgut epithelial cells of insects. The sequence is that of Pesticidal crystal protein Cry1Ic (cry1Ic) from Bacillus thuringiensis.